Here is a 178-residue protein sequence, read N- to C-terminus: uncharacterized protein (178 aa).

This is an uncharacterized protein from Saccharomyces cerevisiae (strain ATCC 204508 / S288c) (Baker's yeast).